A 430-amino-acid polypeptide reads, in one-letter code: GTPase Obg (430 aa).

Residues 1-158 (MFVDQVKISL…LDVSLELKLL (158 aa)) form the Obg domain. The segment at 118 to 145 (KGGRGGRGNSRFATPRNPAPDFSEKGEP) is disordered. One can recognise an OBG-type G domain in the interval 159–329 (ADVGLVGFPS…LLYAIADKLE (171 aa)). GTP is bound by residues 165-172 (GFPSVGKS), 190-194 (FTTIK), 212-215 (DLPG), 282-285 (NKMD), and 310-312 (STI). Mg(2+)-binding residues include serine 172 and threonine 192. The 79-residue stretch at 352–430 (KHTPSQDKFT…ILGGEFEFVE (79 aa)) folds into the OCT domain.

It belongs to the TRAFAC class OBG-HflX-like GTPase superfamily. OBG GTPase family. In terms of assembly, monomer. Mg(2+) serves as cofactor.

Its subcellular location is the cytoplasm. An essential GTPase which binds GTP, GDP and possibly (p)ppGpp with moderate affinity, with high nucleotide exchange rates and a fairly low GTP hydrolysis rate. Plays a role in control of the cell cycle, stress response, ribosome biogenesis and in those bacteria that undergo differentiation, in morphogenesis control. In Staphylococcus aureus (strain COL), this protein is GTPase Obg.